The following is a 381-amino-acid chain: MMFSGFNADYEASSFRCSSASPAGDSLSYYHSPADSFSSMGSPVNTQDFCADLSVSSANFIPTVTATSTSPDLQWLVQPTLVSSVAPSQTRAPHPYGLPTQSAGAYARAEMVKTVSGGRAQSIGRRGKVEQLSPEEEEKRRIRRERNKMAAAKCRNRRRELTDTLQAETDQLEDKKSALQTEIANLLKEKEKLEFILAAHRPACKIPDDLGFPEEMSVASLDLTGGLPEASTPESEEAFTLPLLNDPEPKPSLEPVKSISNVELKAEPFDDFLFPASSRPSGSETSRSVPNVDLSGSFYAADWEPLHSNSLGMGPMVTELEPLCTPVVTCTPLLRLPELTHAAGPVSSQRRQGSRHPDVPLPELVHYREEKHVFPQRFPST.

One can recognise a bZIP domain in the interval 137-200; it reads EEKRRIRRER…EKLEFILAAH (64 aa). A basic motif region spans residues 139-159; sequence KRRIRRERNKMAAAKCRNRRR. The leucine-zipper stretch occupies residues 165–193; it reads LQAETDQLEDKKSALQTEIANLLKEKEKL.

Belongs to the bZIP family. Fos subfamily.

It is found in the host nucleus. This Mus musculus (Mouse) protein is p55-v-Fos-transforming protein (V-FOS).